Reading from the N-terminus, the 617-residue chain is Vitamin B12 transporter BtuB (617 aa).

The N-terminal stretch at 1 to 22 (MRKTFLAITCASLLSPTFYSQA) is a signal peptide. Residues 29–36 (ETVVVTAN) carry the TonB box motif. One can recognise a TBDR plug domain in the interval 40-154 (QIDGAVLAQT…ISGVINIITR (115 aa)). Residues 159 to 617 (DDSGRVSAGY…QYFVSADYRF (459 aa)) enclose the TBDR beta-barrel domain. Positions 600–617 (VGYVTPGRQYFVSADYRF) match the TonB C-terminal box motif.

This sequence belongs to the TonB-dependent receptor family. BtuB (TC 1.B.14.3.1) subfamily.

Its subcellular location is the cell outer membrane. In terms of biological role, involved in the active translocation of vitamin B12 (cyanocobalamin) across the outer membrane to the periplasmic space. It derives its energy for transport by interacting with the trans-periplasmic membrane protein TonB. The polypeptide is Vitamin B12 transporter BtuB (Vibrio campbellii (strain ATCC BAA-1116)).